The sequence spans 373 residues: Putative glutamate--cysteine ligase 2-1 (373 aa).

This sequence belongs to the glutamate--cysteine ligase type 2 family. YbdK subfamily.

The enzyme catalyses L-cysteine + L-glutamate + ATP = gamma-L-glutamyl-L-cysteine + ADP + phosphate + H(+). In terms of biological role, ATP-dependent carboxylate-amine ligase which exhibits weak glutamate--cysteine ligase activity. The protein is Putative glutamate--cysteine ligase 2-1 of Legionella pneumophila (strain Paris).